A 241-amino-acid chain; its full sequence is MSQADLPEPAPAFQLKGSMLAITVLELAHNDIERLDEQLAAKVEQAPDFFNNTPLVLALDKLPEASREIDIQALVALCRKHRLRTLALRASDAAHLEAAAALDLPVLPPSGARERKVDPSSKTPAKPAEPTYRPTRVVSTPIRGGQQVYAQGGDLVVLAPVSPGAELLADGNIHVYGPLRGRALAGIKGDTTARIFCRQLAAEMVSIAGQYKVAEDLRRDPLWAEAVQVSLSGDVLNITRL.

A disordered region spans residues 109–135; it reads PSGARERKVDPSSKTPAKPAEPTYRPT.

Belongs to the MinC family. As to quaternary structure, interacts with MinD and FtsZ.

Cell division inhibitor that blocks the formation of polar Z ring septums. Rapidly oscillates between the poles of the cell to destabilize FtsZ filaments that have formed before they mature into polar Z rings. Prevents FtsZ polymerization. This Stutzerimonas stutzeri (strain A1501) (Pseudomonas stutzeri) protein is Probable septum site-determining protein MinC.